A 579-amino-acid chain; its full sequence is Potassium-transporting ATPase potassium-binding subunit (579 aa).

The next 10 helical transmembrane spans lie at 2–22, 66–86, 135–155, 177–197, 260–280, 292–312, 391–411, 437–457, 490–510, and 546–566; these read MNLV…AIPL, SFSV…LHIF, GLTV…FALI, VLYI…SQGV, TILS…ALCF, GIAI…IVGV, VFGG…LAVF, VLVC…ASIL, FAGF…SMIF, and FIGL…FPAL.

It belongs to the KdpA family. In terms of assembly, the system is composed of three essential subunits: KdpA, KdpB and KdpC.

It localises to the cell membrane. Part of the high-affinity ATP-driven potassium transport (or Kdp) system, which catalyzes the hydrolysis of ATP coupled with the electrogenic transport of potassium into the cytoplasm. This subunit binds the extracellular potassium ions and delivers the ions to the membrane domain of KdpB through an intramembrane tunnel. This Clostridium botulinum (strain Eklund 17B / Type B) protein is Potassium-transporting ATPase potassium-binding subunit.